The following is a 256-amino-acid chain: Small ribosomal subunit protein eS1 (256 aa).

The segment covering 1–18 (MAVGKNKRLSKGKKGIKK) has biased composition (basic residues). The tract at residues 1–20 (MAVGKNKRLSKGKKGIKKRT) is disordered. Position 2 is an N-acetylalanine; partial (A2).

This sequence belongs to the eukaryotic ribosomal protein eS1 family. In terms of assembly, component of the small ribosomal subunit. Mature ribosomes consist of a small (40S) and a large (60S) subunit. The 40S subunit contains about 33 different proteins and 1 molecule of RNA (18S). The 60S subunit contains about 49 different proteins and 3 molecules of RNA (25S, 5.8S and 5S).

The protein localises to the cytoplasm. This chain is Small ribosomal subunit protein eS1 (rps1), found in Aspergillus terreus (strain NIH 2624 / FGSC A1156).